The chain runs to 808 residues: Protein SEY1 (808 aa).

The segment at 1–21 (MSSELSEGELSHTSSSSSFVP) is disordered. Residues 1-701 (MSSELSEGEL…KRSIVQHITQ (701 aa)) lie on the Cytoplasmic side of the membrane. The region spanning 57 to 286 (GNNYHIISVF…VGDELFKPEY (230 aa)) is the GB1/RHD3-type G domain. 67-74 (GSQSTGKS) lines the GTP pocket. A helical transmembrane segment spans residues 702-722 (IPYYIYLVIVFLGWNEFMAII). Over 723–725 (RNP) the chain is Lumenal. A helical transmembrane segment spans residues 726–746 (LLFSLALLLGASVYILYKLNL). Topologically, residues 747–808 (LKPAIVVAQR…YSDNIELDDM (62 aa)) are cytoplasmic.

It belongs to the TRAFAC class dynamin-like GTPase superfamily. GB1/RHD3 GTPase family. RHD3 subfamily.

Its subcellular location is the endoplasmic reticulum membrane. Functionally, cooperates with the reticulon proteins and tubule-shaping DP1 family proteins to generate and maintain the structure of the tubular endoplasmic reticulum network. Has GTPase activity, which is required for its function in ER organization. This is Protein SEY1 from Candida tropicalis (strain ATCC MYA-3404 / T1) (Yeast).